The primary structure comprises 465 residues: tRNA modification GTPase MnmE (465 aa).

(6S)-5-formyl-5,6,7,8-tetrahydrofolate-binding residues include Arg27, Glu91, and Arg130. One can recognise a TrmE-type G domain in the interval 227–386 (GLSTAIIGRP…LEAKIADLFF (160 aa)). Asn237 provides a ligand contact to K(+). Residues 237 to 242 (NVGKSS), 256 to 262 (TDIAGTT), and 281 to 284 (DTAG) contribute to the GTP site. Mg(2+) is bound at residue Ser241. K(+)-binding residues include Thr256, Ile258, and Thr261. Thr262 lines the Mg(2+) pocket. Lys465 provides a ligand contact to (6S)-5-formyl-5,6,7,8-tetrahydrofolate.

This sequence belongs to the TRAFAC class TrmE-Era-EngA-EngB-Septin-like GTPase superfamily. TrmE GTPase family. In terms of assembly, homodimer. Heterotetramer of two MnmE and two MnmG subunits. K(+) is required as a cofactor.

It localises to the cytoplasm. Exhibits a very high intrinsic GTPase hydrolysis rate. Involved in the addition of a carboxymethylaminomethyl (cmnm) group at the wobble position (U34) of certain tRNAs, forming tRNA-cmnm(5)s(2)U34. This Enterococcus faecalis (strain ATCC 700802 / V583) protein is tRNA modification GTPase MnmE.